The following is a 1257-amino-acid chain: Insulin receptor substrate 4 (1257 aa).

Positions 78–199 constitute a PH domain; it reads EVCKRGYLRK…WYLLLSRLIL (122 aa). The IRS-type PTB domain maps to 231–335; the sequence is YKDVWQVIVK…EKMRALCADE (105 aa). Disordered stretches follow at residues 406-653, 678-921, and 1179-1257; these read VAHS…GGRF, IPEG…SSDY, and QDVA…KRGR. Positions 408–424 are enriched in basic residues; sequence HSRRGRLHLPRGRRSRR. Positions 487-490 match the YXXM motif 1 motif; the sequence is YMPM. Gly residues predominate over residues 495 to 509; sequence SGNGRGSGGGQGSNG. Residues 510-524 are compositionally biased toward low complexity; sequence QGSSSHSSGGNQCSG. Gly residues-rich tracts occupy residues 525–542 and 551–599; these read EGQG…GSGG and GTAG…SGKG. Positions 627–640 are enriched in pro residues; the sequence is MPPPPPPPPPPPPA. Residues 641–650 are compositionally biased toward gly residues; sequence GGTGGKGKSG. Residues 678-800 are CRK-binding; sequence IPEGAARGPH…KNPRNPQGGS (123 aa). Short sequence motifs (YXXM motif) lie at residues 700 to 703, 717 to 720, and 743 to 746; these read YVPM, YMPM, and YMMM. A compositionally biased stretch (pro residues) spans 750–761; it reads VSPPPAPSPPKA. Residues 763–774 show a composition bias toward basic and acidic residues; it reads DTNKEDDSKDND. The YXXM motif 5 signature appears at 779–782; that stretch reads YMFM. The segment covering 800 to 810 has biased composition (low complexity); that stretch reads SSSKSWSSYFS. Over residues 815–826 the composition is skewed to polar residues; sequence FRSSPLGQNDNS. The YXXM motif 6 motif lies at 828 to 831; that stretch reads YVPM. Residues 840 to 855 are compositionally biased toward basic and acidic residues; that stretch reads GLDKEVSYNWDPKDAA. Positions 895–897 are GRB2-binding; the sequence is ITK. Tyr-921 bears the Phosphotyrosine mark. The short motif at 921–924 is the YXXM motif 7 element; sequence YVNM. Positions 1236–1257 are enriched in basic and acidic residues; that stretch reads DTHVRMDFARRDNQFDSPKRGR.

In terms of assembly, interacts with SOCS6 in response to stimulation with either insulin or IGF1. Interacts with CRK and CRKL. Interaction with CRK is stronger than with CRKL. Interacts with CRK via the phosphorylated YXXM motifs. Interacts with GRB2 and PIK3R1. Interacts with PLC-gamma, SHC1, PTK6, PPP4C and NISCH. Interacts with ASB4; this interaction promotes IRS4 proteasomal degradation. Post-translationally, phosphorylated on tyrosine residues in response to both insulin and IGF1 signaling. Phosphorylated on Tyr-921 in response to FGF2 signaling. Phosphorylation of Tyr-921 is required for GRB2, phospholipase C-gamma and phosphatidylinositol 3-kinase interaction. Ubiquitinated in a ASB4-dependent manner, leading to proteasomal degradation. Expressed in myoblasts. Expressed in liver and hepatocellular carcinoma.

The protein localises to the cell membrane. In terms of biological role, acts as an interface between multiple growth factor receptors possessing tyrosine kinase activity, such as insulin receptor, IGF1R and FGFR1, and a complex network of intracellular signaling molecules containing SH2 domains. Involved in the IGF1R mitogenic signaling pathway. Promotes the AKT1 signaling pathway and BAD phosphorylation during insulin stimulation without activation of RPS6KB1 or the inhibition of apoptosis. Interaction with GRB2 enhances insulin-stimulated mitogen-activated protein kinase activity. May be involved in nonreceptor tyrosine kinase signaling in myoblasts. Plays a pivotal role in the proliferation/differentiation of hepatoblastoma cell through EPHB2 activation upon IGF1 stimulation. May play a role in the signal transduction in response to insulin and to a lesser extent in response to IL4 and GH on mitogenesis. Plays a role in growth, reproduction and glucose homeostasis. May act as negative regulators of the IGF1 signaling pathway by suppressing the function of IRS1 and IRS2. This is Insulin receptor substrate 4 (IRS4) from Homo sapiens (Human).